The primary structure comprises 119 residues: uncharacterized protein (119 aa).

A helical membrane pass occupies residues 80–104; the sequence is VFPLVYLFCVVFQFLSLGCYLSIFF.

The protein localises to the membrane. This is an uncharacterized protein from Saccharomyces cerevisiae (strain ATCC 204508 / S288c) (Baker's yeast).